The chain runs to 597 residues: 2-succinyl-5-enolpyruvyl-6-hydroxy-3-cyclohexene-1-carboxylate synthase (597 aa).

The protein belongs to the TPP enzyme family. MenD subfamily. As to quaternary structure, homodimer. It depends on Mg(2+) as a cofactor. The cofactor is Mn(2+). Requires thiamine diphosphate as cofactor.

The catalysed reaction is isochorismate + 2-oxoglutarate + H(+) = 5-enolpyruvoyl-6-hydroxy-2-succinyl-cyclohex-3-ene-1-carboxylate + CO2. It functions in the pathway quinol/quinone metabolism; 1,4-dihydroxy-2-naphthoate biosynthesis; 1,4-dihydroxy-2-naphthoate from chorismate: step 2/7. It participates in cofactor biosynthesis; phylloquinone biosynthesis. Catalyzes the thiamine diphosphate-dependent decarboxylation of 2-oxoglutarate and the subsequent addition of the resulting succinic semialdehyde-thiamine pyrophosphate anion to isochorismate to yield 2-succinyl-5-enolpyruvyl-6-hydroxy-3-cyclohexene-1-carboxylate (SEPHCHC). In Synechococcus sp. (strain JA-3-3Ab) (Cyanobacteria bacterium Yellowstone A-Prime), this protein is 2-succinyl-5-enolpyruvyl-6-hydroxy-3-cyclohexene-1-carboxylate synthase.